A 529-amino-acid chain; its full sequence is BTB/POZ domain-containing protein 6 (529 aa).

The 71-residue stretch at 127-197 (ADVHFIVGPA…LYSDEIDLEA (71 aa)) folds into the BTB domain.

In terms of assembly, homodimer and heterodimer. Interacts with cul3 via the BTB domain.

It localises to the cytoplasm. Adapter protein for the cul3 E3 ubiquitin-protein ligase complex. Involved in late neuronal development and muscle formation. In Xenopus tropicalis (Western clawed frog), this protein is BTB/POZ domain-containing protein 6 (btbd6).